We begin with the raw amino-acid sequence, 348 residues long: Centromere protein N-A (348 aa).

The protein belongs to the CENP-N/CHL4 family.

The protein localises to the nucleus. It localises to the chromosome. Its subcellular location is the centromere. In terms of biological role, probable component of a centromeric complex involved in assembly of kinetochore proteins, mitotic progression and chromosome segregation. This chain is Centromere protein N-A (cenpn-a), found in Xenopus laevis (African clawed frog).